We begin with the raw amino-acid sequence, 582 residues long: ATP-dependent lipid A-core flippase (582 aa).

5 helical membrane-spanning segments follow: residues 16-36, 63-83, 153-173, 253-273, and 275-295; these read LWPM…ALII, VLLW…ASGF, IIGL…ILIV, PIIQ…ASFP, and VMET…IALM. Positions 28 to 310 constitute an ABC transmembrane type-1 domain; the sequence is AVAAIALIIN…LTNVNAQFQR (283 aa). The ABC transporter domain maps to 342 to 578; the sequence is LEFRQVNFAY…NGAYAQLHRM (237 aa). 376 to 383 is an ATP binding site; the sequence is GRSGSGKS.

This sequence belongs to the ABC transporter superfamily. Lipid exporter (TC 3.A.1.106) family. As to quaternary structure, homodimer.

It is found in the cell inner membrane. It carries out the reaction ATP + H2O + lipid A-core oligosaccharideSide 1 = ADP + phosphate + lipid A-core oligosaccharideSide 2.. Functionally, involved in lipopolysaccharide (LPS) biosynthesis. Translocates lipid A-core from the inner to the outer leaflet of the inner membrane. Transmembrane domains (TMD) form a pore in the inner membrane and the ATP-binding domain (NBD) is responsible for energy generation. The polypeptide is ATP-dependent lipid A-core flippase (Pectobacterium atrosepticum (strain SCRI 1043 / ATCC BAA-672) (Erwinia carotovora subsp. atroseptica)).